The primary structure comprises 326 residues: MISDRQLSILNAIVEDYVDLGQPIGSKTLIERHKLNVSPATIRNEMKQLEDLELIEKTHTSSGRYPSESGIRYYVNQLLQETSHQQQTKMQRLKDLVIENHYDLSSTLSDFANELSIASQYTTLVMRPNHKQDIINNIHLIRANAYLVIMVVVFTSGHVEHLHLASEVPLSNDELTKISNFVTAKYNEWNNHRFENELNAFVKSDTEKDFIKDMLNMIDIHFDNQSNGIFMGGKVKLIDALNESNVSSIQPILQYIESNKITQLLDEMSNTSINVKIGHEIESSLSDISIVTSEYHIDDRLKGQIAVIGPTAMNYQNVIRLLNTIW.

It belongs to the HrcA family.

Negative regulator of class I heat shock genes (grpE-dnaK-dnaJ and groELS operons). Prevents heat-shock induction of these operons. In Staphylococcus saprophyticus subsp. saprophyticus (strain ATCC 15305 / DSM 20229 / NCIMB 8711 / NCTC 7292 / S-41), this protein is Heat-inducible transcription repressor HrcA.